Consider the following 267-residue polypeptide: Proteasome subunit alpha (267 aa).

Residues 231 to 267 (ETLLQERDSKESAESEEPKESEEGKKTGKKSDADSSD) form a disordered region. Basic and acidic residues predominate over residues 234–267 (LQERDSKESAESEEPKESEEGKKTGKKSDADSSD).

Belongs to the peptidase T1A family. The 20S proteasome core is composed of 14 alpha and 14 beta subunits that assemble into four stacked heptameric rings, resulting in a barrel-shaped structure. The two inner rings, each composed of seven catalytic beta subunits, are sandwiched by two outer rings, each composed of seven alpha subunits. The catalytic chamber with the active sites is on the inside of the barrel. Has a gated structure, the ends of the cylinder being occluded by the N-termini of the alpha-subunits. Is capped by the proteasome-associated ATPase, ARC.

Its subcellular location is the cytoplasm. It participates in protein degradation; proteasomal Pup-dependent pathway. With respect to regulation, the formation of the proteasomal ATPase ARC-20S proteasome complex, likely via the docking of the C-termini of ARC into the intersubunit pockets in the alpha-rings, may trigger opening of the gate for substrate entry. Interconversion between the open-gate and close-gate conformations leads to a dynamic regulation of the 20S proteasome proteolysis activity. Functionally, component of the proteasome core, a large protease complex with broad specificity involved in protein degradation. The chain is Proteasome subunit alpha from Mycobacterium marinum (strain ATCC BAA-535 / M).